The primary structure comprises 374 residues: Large ribosomal subunit protein bL27m (374 aa).

The N-terminal 41 residues, 1–41 (MLRLSGVKSAVRARAAAGAAFSVSLSGPQAVSLLALPLVRH), are a transit peptide targeting the mitochondrion.

The protein belongs to the bacterial ribosomal protein bL27 family.

The protein resides in the mitochondrion. Functionally, component of the large subunit of mitochondrial ribosome. In Yarrowia lipolytica (strain CLIB 122 / E 150) (Yeast), this protein is Large ribosomal subunit protein bL27m (MRPL2).